The chain runs to 526 residues: ATP synthase subunit alpha (526 aa).

171–178 is a binding site for ATP; it reads GDRQTGKT.

The protein belongs to the ATPase alpha/beta chains family. As to quaternary structure, F-type ATPases have 2 components, CF(1) - the catalytic core - and CF(0) - the membrane proton channel. CF(1) has five subunits: alpha(3), beta(3), gamma(1), delta(1), epsilon(1). CF(0) has three main subunits: a(1), b(2) and c(9-12). The alpha and beta chains form an alternating ring which encloses part of the gamma chain. CF(1) is attached to CF(0) by a central stalk formed by the gamma and epsilon chains, while a peripheral stalk is formed by the delta and b chains.

It is found in the cell membrane. It catalyses the reaction ATP + H2O + 4 H(+)(in) = ADP + phosphate + 5 H(+)(out). Its function is as follows. Produces ATP from ADP in the presence of a proton gradient across the membrane. The alpha chain is a regulatory subunit. The polypeptide is ATP synthase subunit alpha (Christiangramia forsetii (strain DSM 17595 / CGMCC 1.15422 / KT0803) (Gramella forsetii)).